A 123-amino-acid chain; its full sequence is Small ribosomal subunit protein uS12 (123 aa).

D89 carries the post-translational modification 3-methylthioaspartic acid.

This sequence belongs to the universal ribosomal protein uS12 family. In terms of assembly, part of the 30S ribosomal subunit. Contacts proteins S8 and S17. May interact with IF1 in the 30S initiation complex.

Its function is as follows. With S4 and S5 plays an important role in translational accuracy. Functionally, interacts with and stabilizes bases of the 16S rRNA that are involved in tRNA selection in the A site and with the mRNA backbone. Located at the interface of the 30S and 50S subunits, it traverses the body of the 30S subunit contacting proteins on the other side and probably holding the rRNA structure together. The combined cluster of proteins S8, S12 and S17 appears to hold together the shoulder and platform of the 30S subunit. The sequence is that of Small ribosomal subunit protein uS12 from Sinorhizobium medicae (strain WSM419) (Ensifer medicae).